A 508-amino-acid polypeptide reads, in one-letter code: Photosystem II CP47 reaction center protein (508 aa).

A run of 6 helical transmembrane segments spans residues 21–36 (SVHI…WAGS), 101–115 (IVFS…IWHW), 140–156 (GIHL…FGAF), 203–218 (IAAG…FHLS), 237–252 (VLSS…AFVV), and 457–472 (SFAL…HGAR).

Belongs to the PsbB/PsbC family. PsbB subfamily. PSII is composed of 1 copy each of membrane proteins PsbA, PsbB, PsbC, PsbD, PsbE, PsbF, PsbH, PsbI, PsbJ, PsbK, PsbL, PsbM, PsbT, PsbX, PsbY, PsbZ, Psb30/Ycf12, at least 3 peripheral proteins of the oxygen-evolving complex and a large number of cofactors. It forms dimeric complexes. Binds multiple chlorophylls. PSII binds additional chlorophylls, carotenoids and specific lipids. is required as a cofactor.

The protein localises to the plastid. It is found in the chloroplast thylakoid membrane. In terms of biological role, one of the components of the core complex of photosystem II (PSII). It binds chlorophyll and helps catalyze the primary light-induced photochemical processes of PSII. PSII is a light-driven water:plastoquinone oxidoreductase, using light energy to abstract electrons from H(2)O, generating O(2) and a proton gradient subsequently used for ATP formation. The polypeptide is Photosystem II CP47 reaction center protein (Lemna minor (Common duckweed)).